A 424-amino-acid chain; its full sequence is Imidazolonepropionase (424 aa).

Fe(3+) is bound by residues H84 and H86. Zn(2+) contacts are provided by H84 and H86. 3 residues coordinate 4-imidazolone-5-propanoate: R93, Y156, and H189. Y156 serves as a coordination point for N-formimidoyl-L-glutamate. H254 lines the Fe(3+) pocket. Position 254 (H254) interacts with Zn(2+). E257 serves as a coordination point for 4-imidazolone-5-propanoate. Fe(3+) is bound at residue D328. D328 lines the Zn(2+) pocket. The N-formimidoyl-L-glutamate site is built by N330 and G332. S333 lines the 4-imidazolone-5-propanoate pocket.

The protein belongs to the metallo-dependent hydrolases superfamily. HutI family. The cofactor is Zn(2+). Fe(3+) serves as cofactor.

It is found in the cytoplasm. It carries out the reaction 4-imidazolone-5-propanoate + H2O = N-formimidoyl-L-glutamate. The protein operates within amino-acid degradation; L-histidine degradation into L-glutamate; N-formimidoyl-L-glutamate from L-histidine: step 3/3. Functionally, catalyzes the hydrolytic cleavage of the carbon-nitrogen bond in imidazolone-5-propanoate to yield N-formimidoyl-L-glutamate. It is the third step in the universal histidine degradation pathway. The protein is Imidazolonepropionase of Geobacillus thermodenitrificans (strain NG80-2).